The primary structure comprises 177 residues: ATP-dependent protease subunit HslV (177 aa).

The active site involves Thr-6. Na(+) contacts are provided by Gly-161, Cys-164, and Thr-167.

This sequence belongs to the peptidase T1B family. HslV subfamily. A double ring-shaped homohexamer of HslV is capped on each side by a ring-shaped HslU homohexamer. The assembly of the HslU/HslV complex is dependent on binding of ATP.

The protein resides in the cytoplasm. It carries out the reaction ATP-dependent cleavage of peptide bonds with broad specificity.. Allosterically activated by HslU binding. Functionally, protease subunit of a proteasome-like degradation complex believed to be a general protein degrading machinery. This Petrotoga mobilis (strain DSM 10674 / SJ95) protein is ATP-dependent protease subunit HslV.